The following is a 277-amino-acid chain: MRPLQEKIIAYEHVLPEIDPQKEIRKSIDFLKDYLKENPFLKSYVLGISGGQDSTLTGKLCQMAIEEMREETGDDSYQFIAVRLPYGVQADASDAADAIAFQKPDQDLIVNIKDPVDAMVKVVEATGQKITDFNKGNIKARQRMVVQYAIAGANNGAVVGTDHAAENFSGFYTKYGDGAADLTPLFRLDKRQGKAMLKELGCPKHLYEKAPTADLEEEKPDLPDEVALGVTYKEVDDYLEGKEVSEKAAEQIEKLWKKSEHKRHLPVTIFDDFYKKN.

47–54 (GISGGQDS) lines the ATP pocket. Position 53 (D53) interacts with Mg(2+). R141 serves as a coordination point for deamido-NAD(+). T161 is an ATP binding site. E166 serves as a coordination point for Mg(2+). Deamido-NAD(+) contacts are provided by K174 and D181. The ATP site is built by K190 and T212. 261 to 262 (HK) provides a ligand contact to deamido-NAD(+).

It belongs to the NAD synthetase family. Homodimer.

The enzyme catalyses deamido-NAD(+) + NH4(+) + ATP = AMP + diphosphate + NAD(+) + H(+). The protein operates within cofactor biosynthesis; NAD(+) biosynthesis; NAD(+) from deamido-NAD(+) (ammonia route): step 1/1. Its function is as follows. Catalyzes the ATP-dependent amidation of deamido-NAD to form NAD. Uses ammonia as a nitrogen source. In Lactobacillus gasseri (strain ATCC 33323 / DSM 20243 / BCRC 14619 / CIP 102991 / JCM 1131 / KCTC 3163 / NCIMB 11718 / NCTC 13722 / AM63), this protein is NH(3)-dependent NAD(+) synthetase.